A 200-amino-acid chain; its full sequence is Transcription elongation factor A protein-like 3 (200 aa).

A disordered region spans residues 1-200; that stretch reads MEKPYNKNEG…QRGLHDIPYL (200 aa). Acidic residues predominate over residues 20 to 36; it reads DEVEPDDEGKSDEEEKP. Ser30 is subject to Phosphoserine. Positions 37–50 are enriched in basic and acidic residues; that stretch reads DVEGKTECEGKRED. Over residues 51–64 the composition is skewed to acidic residues; the sequence is EGEPGDEGQLEDEG. A Phosphoserine modification is found at Ser65. Composition is skewed to basic and acidic residues over residues 65-80, 96-107, and 115-154; these read SQEK…KPQG, AAEKRPAEDYVP, and DRGT…EELR.

Belongs to the TFS-II family. TFA subfamily.

The protein resides in the nucleus. May be involved in transcriptional regulation. This is Transcription elongation factor A protein-like 3 (TCEAL3) from Homo sapiens (Human).